The following is a 227-amino-acid chain: uncharacterized protein (227 aa).

Transmembrane regions (helical) follow at residues 15–34 (FIAA…FLIY), 55–77 (TFLF…ASGV), 92–114 (AFSM…YSLL), 121–140 (FPGE…TSLL), 145–167 (LVFL…VNYS), 180–202 (PLYI…FLPL), and 206–224 (FAIY…YRVL).

It localises to the cell membrane. This is an uncharacterized protein from Archaeoglobus fulgidus (strain ATCC 49558 / DSM 4304 / JCM 9628 / NBRC 100126 / VC-16).